The following is a 137-amino-acid chain: Small ribosomal subunit protein uS12 (137 aa).

Positions Lys33–Lys57 are disordered. The residue at position 102 (Asp102) is a 3-methylthioaspartic acid.

Belongs to the universal ribosomal protein uS12 family. Part of the 30S ribosomal subunit. Contacts proteins S8 and S17. May interact with IF1 in the 30S initiation complex.

Its function is as follows. With S4 and S5 plays an important role in translational accuracy. Functionally, interacts with and stabilizes bases of the 16S rRNA that are involved in tRNA selection in the A site and with the mRNA backbone. Located at the interface of the 30S and 50S subunits, it traverses the body of the 30S subunit contacting proteins on the other side and probably holding the rRNA structure together. The combined cluster of proteins S8, S12 and S17 appears to hold together the shoulder and platform of the 30S subunit. The chain is Small ribosomal subunit protein uS12 from Streptococcus thermophilus (strain CNRZ 1066).